The chain runs to 637 residues: Chaperone protein DnaK (637 aa).

Thr-198 is modified (phosphothreonine; by autocatalysis). Residues Ala-601–Gly-615 show a composition bias toward low complexity. The interval Ala-601–Lys-637 is disordered. Positions Asp-623–Lys-637 are enriched in acidic residues.

Belongs to the heat shock protein 70 family.

Functionally, acts as a chaperone. The chain is Chaperone protein DnaK from Vibrio atlanticus (strain LGP32) (Vibrio splendidus (strain Mel32)).